A 193-amino-acid chain; its full sequence is Large ribosomal subunit protein bL9 (193 aa).

Positions 155–193 (AEGETLTSAEAIYDIQEKPLAENQEEMNDNDANSINEQA) are disordered. Over residues 184–193 (NDANSINEQA) the composition is skewed to polar residues.

The protein belongs to the bacterial ribosomal protein bL9 family.

Binds to the 23S rRNA. This chain is Large ribosomal subunit protein bL9, found in Bartonella quintana (strain Toulouse) (Rochalimaea quintana).